The primary structure comprises 450 residues: Methylenetetrahydrofolate--tRNA-(uracil-5-)-methyltransferase TrmFO (450 aa).

9–14 (GGGMAG) is a binding site for FAD.

This sequence belongs to the MnmG family. TrmFO subfamily. The cofactor is FAD.

The protein resides in the cytoplasm. It catalyses the reaction uridine(54) in tRNA + (6R)-5,10-methylene-5,6,7,8-tetrahydrofolate + NADH + H(+) = 5-methyluridine(54) in tRNA + (6S)-5,6,7,8-tetrahydrofolate + NAD(+). It carries out the reaction uridine(54) in tRNA + (6R)-5,10-methylene-5,6,7,8-tetrahydrofolate + NADPH + H(+) = 5-methyluridine(54) in tRNA + (6S)-5,6,7,8-tetrahydrofolate + NADP(+). In terms of biological role, catalyzes the folate-dependent formation of 5-methyl-uridine at position 54 (M-5-U54) in all tRNAs. The protein is Methylenetetrahydrofolate--tRNA-(uracil-5-)-methyltransferase TrmFO of Roseobacter denitrificans (strain ATCC 33942 / OCh 114) (Erythrobacter sp. (strain OCh 114)).